The primary structure comprises 373 residues: Malate dehydrogenase, mitochondrial (373 aa).

Residues 69–75 and Asp-95 contribute to the NAD(+) site; that span reads GAAGGIG. Substrate is bound by residues Arg-141 and Arg-147. NAD(+) contacts are provided by residues Asn-154 and 177–179; that span reads ISN. Residues Asn-179 and Arg-213 each contribute to the substrate site. The active-site Proton acceptor is His-237. Met-288 contributes to the NAD(+) binding site.

It belongs to the LDH/MDH superfamily. MDH type 1 family. Homodimer.

The protein resides in the mitochondrion matrix. The catalysed reaction is (S)-malate + NAD(+) = oxaloacetate + NADH + H(+). The sequence is that of Malate dehydrogenase, mitochondrial from Chlamydomonas reinhardtii (Chlamydomonas smithii).